A 95-amino-acid polypeptide reads, in one-letter code: Small ribosomal subunit protein uS19 (95 aa).

Residues 76-95 (PTRRFGGHADKKAATKGQVR) are disordered.

It belongs to the universal ribosomal protein uS19 family.

Functionally, protein S19 forms a complex with S13 that binds strongly to the 16S ribosomal RNA. The protein is Small ribosomal subunit protein uS19 of Pseudothermotoga lettingae (strain ATCC BAA-301 / DSM 14385 / NBRC 107922 / TMO) (Thermotoga lettingae).